Reading from the N-terminus, the 821-residue chain is BDNF/NT-3 growth factors receptor (821 aa).

A signal peptide spans 1 to 31 (MSPWLKWHGPAMARLWGLCLLVLGFWRASLA). 2 disulfides stabilise this stretch: cysteine 32–cysteine 38 and cysteine 36–cysteine 45. The LRRNT domain occupies 32-61 (CPTSCKCSSARIWCTEPSPGIVAFPRLEPN). Residues 32 to 429 (CPTSCKCSSA…DVADQSNREH (398 aa)) are Extracellular-facing. N-linked (GlcNAc...) asparagine glycosylation is found at asparagine 67, asparagine 95, and asparagine 121. LRR repeat units lie at residues 92 to 113 (GLRN…AFLK) and 116 to 137 (NLRH…HFRH). The region spanning 148–196 (NPFTCSCDIMWLKTLQETKSSPDTQDLYCLNESSKNMPLANLQIPNCGL) is the LRRCT domain. 2 disulfide bridges follow: cysteine 152–cysteine 176 and cysteine 154–cysteine 194. 9 N-linked (GlcNAc...) asparagine glycosylation sites follow: asparagine 178, asparagine 205, asparagine 241, asparagine 254, asparagine 280, asparagine 325, asparagine 338, asparagine 350, and asparagine 411. Ig-like C2-type domains lie at 197–282 (PSAR…VNLT) and 301–365 (WCIP…MAKN). Residues cysteine 218 and cysteine 266 are joined by a disulfide bond. A disulfide bridge links cysteine 302 with cysteine 345. The helical transmembrane segment at 430–453 (LSVYAVVVIASVVGFCLLVMLLLL) threads the bilayer. The segment at 454–465 (KLARHSKFGMKG) is interaction with MAPK8IP3/JIP3. Residues 454–821 (KLARHSKFGM…ASPVYLDILG (368 aa)) are Cytoplasmic-facing. Positions 474-497 (DDSASPLHHISNGSNTPSSSEGGP) are disordered. Over residues 484–494 (SNGSNTPSSSE) the composition is skewed to polar residues. Tyrosine 515 is subject to Phosphotyrosine. The Protein kinase domain occupies 537–806 (IVLKRELGEG…KNIKSIHTLL (270 aa)). ATP is bound by residues 543 to 551 (LGEGAFGKV) and lysine 571. Aspartate 675 acts as the Proton acceptor in catalysis. Residues tyrosine 701, tyrosine 705, tyrosine 706, and tyrosine 816 each carry the phosphotyrosine; by autocatalysis modification.

Belongs to the protein kinase superfamily. Tyr protein kinase family. Insulin receptor subfamily. In terms of assembly, exists in a dynamic equilibrium between monomeric (low affinity) and dimeric (high affinity) structures. Interacts (phosphorylated upon activation by BDNF) with SHC1; mediates SHC1 phosphorylation and activation. Interacts (phosphorylated upon activation by BDNF) with PLCG1 and/or PLCG2; mediates PLCG1 phosphorylation and activation. Interacts with SH2B1 and SH2B2. Interacts with NGFR; may regulate the ligand specificity of the receptor. Interacts with SORCS2; this interaction is important for normal targeting to post-synaptic densities in response to high-frequency stimulation. Interacts (phosphorylated upon ligand-binding) with SH2D1A; regulates NTRK2. Interacts with SQSTM1 and KIDINS220. Interacts (phosphorylated upon ligand-binding) with FRS2; activates the MAPK signaling pathway. Interacts with APPL1. Interacts with MAPK8IP3/JIP3 and KLC1; interaction with KLC1 is mediated by MAPK8IP3/JIP3. Interacts with SORL1; this interaction facilitates NTRK2 trafficking between synaptic plasma membranes, postsynaptic densities and cell soma, hence positively regulates BDNF signaling. Interacts with SLITRK2. In terms of processing, phosphorylated. Undergoes ligand-mediated autophosphorylation that is required for interaction with SHC1 and PLCG1 and other downstream effectors. Some isoforms are not phosphorylated. Post-translationally, ubiquitinated. Undergoes polyubiquitination upon activation; regulated by NGFR. Ubiquitination regulates the internalization of the receptor. In terms of tissue distribution, expressed in the brain, in neurons (at protein level). Detected in hippocampus (at protein level). Widely expressed in the central and peripheral nervous system. The different forms are differentially expressed in various cell types. Isoform GP95-TRKB is specifically expressed in glial cells.

The protein resides in the cell membrane. It localises to the endosome membrane. Its subcellular location is the early endosome membrane. The protein localises to the cell projection. It is found in the axon. The protein resides in the dendrite. It localises to the cytoplasm. Its subcellular location is the perinuclear region. The protein localises to the postsynaptic density. The catalysed reaction is L-tyrosyl-[protein] + ATP = O-phospho-L-tyrosyl-[protein] + ADP + H(+). Its activity is regulated as follows. The formation of active receptors dimers able to fully transduce the ligand-mediated signal, may be negatively regulated by the formation of inactive heterodimers with the non-catalytic isoforms. The neuronal activity and the influx of calcium positively regulate the kinase activity and the internalization of the receptor which are both important for active signaling. Regulated by NGFR that may control the internalization of the receptor. NGFR may also stimulate the activation by BDNF compared to NTF3 and NTF4. SH2D1A inhibits the autophosphorylation of the receptor, and alters the recruitment and activation of downstream effectors and signaling cascades. Receptor tyrosine kinase involved in the development and the maturation of the central and the peripheral nervous systems through regulation of neuron survival, proliferation, migration, differentiation, and synapse formation and plasticity. Receptor for BDNF/brain-derived neurotrophic factor and NTF4/neurotrophin-4. Alternatively can also bind NTF3/neurotrophin-3 which is less efficient in activating the receptor but regulates neuron survival through NTRK2. Upon ligand-binding, undergoes homodimerization, autophosphorylation and activation. Recruits, phosphorylates and/or activates several downstream effectors including SHC1, FRS2, SH2B1, SH2B2 and PLCG1 that regulate distinct overlapping signaling cascades. Through SHC1, FRS2, SH2B1, SH2B2 activates the GRB2-Ras-MAPK cascade that regulates for instance neuronal differentiation including neurite outgrowth. Through the same effectors controls the Ras-PI3 kinase-AKT1 signaling cascade that mainly regulates growth and survival. Through PLCG1 and the downstream protein kinase C-regulated pathways controls synaptic plasticity. Thereby, plays a role in learning and memory by regulating both short term synaptic function and long-term potentiation. PLCG1 also leads to NF-Kappa-B activation and the transcription of genes involved in cell survival. Hence, it is able to suppress anoikis, the apoptosis resulting from loss of cell-matrix interactions. Isoform GP95-TRKB may also play a role in neutrophin-dependent calcium signaling in glial cells and mediate communication between neurons and glia. The protein is BDNF/NT-3 growth factors receptor of Mus musculus (Mouse).